The following is a 1013-amino-acid chain: Poly [ADP-ribose] polymerase 1 (1013 aa).

A2 is subject to N-acetylalanine. The PARP-type 1 zinc finger occupies 9–93 (YRVQYAKSGR…KVKKTAEAGG (85 aa)). Zn(2+)-binding residues include C21 and C24. Phosphoserine is present on S41. The Zn(2+) site is built by H53 and C56. An N6-acetyllysine mark is found at K97 and K105. A PARP-type 2 zinc finger spans residues 113-203 (FAAEYAKSNR…ALKKQLPAIK (91 aa)). Positions 125 and 128 each coordinate Zn(2+). Residue K131 is modified to N6-acetyllysine. Positions 159 and 162 each coordinate Zn(2+). Phosphoserine is present on residues S177, S179, and S185. Residue K192 forms a Glycyl lysine isopeptide (Lys-Gly) (interchain with G-Cter in SUMO2) linkage. Residues 200 to 226 (PAIKNEGKRKGDEVDGTDEVAKKKSRK) form a disordered region. K203 is covalently cross-linked (Glycyl lysine isopeptide (Lys-Gly) (interchain with G-Cter in SUMO1); alternate). K203 is covalently cross-linked (Glycyl lysine isopeptide (Lys-Gly) (interchain with G-Cter in SUMO2); alternate). Over residues 204-226 (NEGKRKGDEVDGTDEVAKKKSRK) the composition is skewed to basic and acidic residues. 2 consecutive short sequence motifs (nuclear localization signal) follow at residues 207–209 (KRK) and 221–226 (KKKSRK). One can recognise a PADR1 zinc-binding domain in the interval 225–359 (RKETDKYSKL…VKKQDRIFPP (135 aa)). K249 participates in a covalent cross-link: Glycyl lysine isopeptide (Lys-Gly) (interchain with G-Cter in SUMO2). S274 and S277 each carry phosphoserine. The tract at residues 290–332 (GALLPCKECSGQLVFKSDAYYCTGDVTAWTKCMVKTQNPSRKE) is zinc ribbon. Zn(2+) contacts are provided by C295, C298, C311, and C321. The segment at 373–523 (VTSAPTAVNS…GVNKSEKRMK (151 aa)) is automodification domain. Positions 385 to 476 (PADKPLSNMK…KSLQDLLSAH (92 aa)) constitute a BRCT domain. Position 387 is a polyADP-ribosyl aspartic acid (D387). PolyADP-ribosyl glutamic acid is present on residues E407, E413, E435, E437, E444, E445, E448, and E456. A Glycyl lysine isopeptide (Lys-Gly) (interchain with G-Cter in SUMO2) cross-link involves residue K467. E484 is subject to PolyADP-ribosyl glutamic acid. K486 participates in a covalent cross-link: Glycyl lysine isopeptide (Lys-Gly) (interchain with G-Cter in SUMO1); alternate. A Glycyl lysine isopeptide (Lys-Gly) (interchain with G-Cter in SUMO2); alternate cross-link involves residue K486. Residues E488 and E491 each carry the polyADP-ribosyl glutamic acid modification. The disordered stretch occupies residues 489-508 (PGEVVAPRGKSAAPSKKSKG). Positions 494–503 (APRGKSAAPS) are enriched in low complexity. S499, S503, and S506 each carry ADP-ribosylserine. K511 participates in a covalent cross-link: Glycyl lysine isopeptide (Lys-Gly) (interchain with G-Cter in SUMO2). E512 and E513 each carry polyADP-ribosyl glutamic acid. S518 is modified (ADP-ribosylserine). E519 carries the polyADP-ribosyl glutamic acid modification. The residue at position 520 (K520) is an N6-(ADP-ribosyl)lysine. Residue K527 forms a Glycyl lysine isopeptide (Lys-Gly) (interchain with G-Cter in SUMO2) linkage. In terms of domain architecture, WGR spans 541-637 (SAHVLEKGGK…KNFTKYPKKF (97 aa)). T593 bears the Phosphothreonine mark. Residues K599 and K620 each carry the N6-acetyllysine modification. The 118-residue stretch at 661–778 (KSKLPKPVQE…DIEVAYSLLR (118 aa)) folds into the PARP alpha-helical domain. A Glycyl lysine isopeptide (Lys-Gly) (interchain with G-Cter in SUMO1); alternate cross-link involves residue K747. K747 participates in a covalent cross-link: Glycyl lysine isopeptide (Lys-Gly) (interchain with G-Cter in SUMO2); alternate. Phosphoserine occurs at positions 781 and 785. Residues 787–1013 (DPIDVNYEKL…LKFNFKTSLW (227 aa)) form the PARP catalytic domain. NAD(+) contacts are provided by residues 861 to 863 (HGS), G870, R877, and S903. The For poly [ADP-ribose] polymerase activity role is filled by E987.

The protein belongs to the ARTD/PARP family. In terms of assembly, homodimer; PARP-type zinc-fingers from separate PARP1 molecules form a dimer module that specifically recognizes DNA strand breaks. Heterodimer; heterodimerizes with PARP2. Interacts (via the PARP catalytic domain) with HPF1. Interacts with NMNAT1. Interacts with nucleosomes; with a preference for nucleosomes containing H2A.X. Interacts with APTX. Component of a base excision repair (BER) complex, containing at least XRCC1, PARP1, PARP2, POLB and LRIG3. Interacts with SRY. The SWAP complex consists of NPM1, NCL, PARP1 and SWAP70. Interacts with TIAM2. Interacts with PARP3; leading to activate PARP1 in absence of DNA. Interacts (when poly-ADP-ribosylated) with CHD1L (via macro domain). Interacts with the DNA polymerase alpha catalytic subunit POLA1; this interaction functions as part of the control of replication fork progression. Interacts with EEF1A1 and TXK. Interacts with RNF4. Interacts with RNF146. Interacts with ZNF423. Interacts with APLF. Interacts with SNAI1 (via zinc fingers); the interaction requires SNAI1 to be poly-ADP-ribosylated and non-phosphorylated (active) by GSK3B. Interacts (when poly-ADP-ribosylated) with PARP9. Interacts with NR4A3; activates PARP1 by improving acetylation of PARP1 and suppressing the interaction between PARP1 and SIRT1. Interacts (via catalytic domain) with PUM3; the interaction inhibits the poly-ADP-ribosylation activity of PARP1 and the degradation of PARP1 by CASP3 following genotoxic stress. Interacts with ZNF365. Interacts with RRP1B. Interacts with TIMELESS; the interaction is direct. Interacts with CGAS; leading to impede the formation of the PARP1-TIMELESS complex. Interacts with KHDC3L, the interaction is increased following the formation of DNA double-strand breaks. Interacts (when auto-poly-ADP-ribosylated) with XRCC1; leading to inhibit PARP1 ADP-ribosyltransferase activity. Interacts with SPINDOC; promoting PARP1 ADP-ribosyltransferase activity. Interacts with BANF1; leading to inhibit PARP1 ADP-ribosyltransferase activity in response to oxidative DNA damage. Interacts (when sumoylated and ubiquitinated) with VCP/p97; leading to its extraction from chromatin. Interacts with YARS1; promoting PARP1 ADP-ribosyltransferase activity. Interacts with PACMP micropeptide; Interacts with PACMP micropeptide; interaction. Interacts (when poly-ADP-ribosylated) with isoform 1 of MACROH2A1; MACROH2A1 specifically binds to poly-ADP-ribose chains and inhibits PARP1 activity, limiting the consumption of nuclear NAD(+). Interacts with CARM1; promoting recruitment to replication forks. Interacts with RECQL. Interacts with ZNF32; the interaction reshapes ZNF432 interacting proteins. Interacts with TPRN; TPRN interacts with a number of DNA damage response proteins, is recruited to sites of DNA damage and may play a role in DNA damage repair. Interacts (when auto-poly-ADP-ribosylated) with AIFM1. Poly-ADP-ribosylated on serine, glutamate and aspartate residues by autocatalysis. Auto-ADP-ribosylation on serine takes place following interaction with HPF1. Auto poly-ADP-ribosylation on serine residues promotes its dissociation from chromatin. Poly-ADP-ribosylated by PARP2; poly-ADP-ribosylation mediates the recruitment of CHD1L to DNA damage sites. Mono-ADP-ribosylated at Lys-520 by SIRT6 in response to oxidative stress, promoting recruitment to double-strand breaks (DSBs) sites. In terms of processing, S-nitrosylated, leading to inhibit transcription regulation activity. Post-translationally, phosphorylated at Thr-593 by PRKDC in response to DNA damage following virus infection, promoting its translocation to the cytosol. Phosphorylated by TXK. Proteolytically cleaved by caspase-3 (CASP3) and caspase-7 (CASP7) in response to apoptosis to generate the Poly [ADP-ribose] polymerase 1, processed N-terminus and Poly [ADP-ribose] polymerase 1, processed C-terminus forms. In terms of processing, sumoylated with SUMO1 or SUMO2 by PIAS4 following prolonged residence (trapping) to chromatin. Sumoylation promotes ubiquitination by RNF4 and removal from chromatin by VCP/p97. Post-translationally, ubiquitinated by RNF4 following sumoylation by PIAS4 in response to prolonged residence (trapping) to chromatin. Ubiquitination promotes removal from chromatin by VCP/p97. Widely expressed. Expression is correlated with proliferation, with higher levels occurring during early fetal development and organogenesis and in the highly proliferative cell compartments of adult. Expressed in B-cells that have been induced to switch to various Ig isotypes.

The protein resides in the chromosome. Its subcellular location is the nucleus. It is found in the nucleolus. The protein localises to the cytoplasm. It localises to the cytosol. The enzyme catalyses NAD(+) + (ADP-D-ribosyl)n-acceptor = nicotinamide + (ADP-D-ribosyl)n+1-acceptor + H(+).. It carries out the reaction L-seryl-[protein] + NAD(+) = O-(ADP-D-ribosyl)-L-seryl-[protein] + nicotinamide + H(+). The catalysed reaction is L-aspartyl-[protein] + NAD(+) = 4-O-(ADP-D-ribosyl)-L-aspartyl-[protein] + nicotinamide. It catalyses the reaction L-glutamyl-[protein] + NAD(+) = 5-O-(ADP-D-ribosyl)-L-glutamyl-[protein] + nicotinamide. The enzyme catalyses L-tyrosyl-[protein] + NAD(+) = O-(ADP-D-ribosyl)-L-tyrosyl-[protein] + nicotinamide + H(+). It carries out the reaction L-histidyl-[protein] + NAD(+) = N(tele)-(ADP-D-ribosyl)-L-histidyl-[protein] + nicotinamide + H(+). Its activity is regulated as follows. ADP-ribosyltransferase activity is regulated via an allosteric activation mechanism. In absence of activation signal, PARP1 is autoinhibited by the PARP alpha-helical domain (also named HD region), which prevents effective NAD(+)-binding. Activity is highly stimulated by signals, such as DNA strand breaks. Binding to damaged DNA unfolds the PARP alpha-helical domain, relieving autoinhibition. Poly-ADP-ribosyltransferase activity is tightly regulated and PARP1 is removed from damaged chromatin following initial poly-ADP-ribosylation of chromatin to avoid prolonged residence (trapping) that has cytotoxic consequences. A number of factors (VCP/p97) or post-translational modifications (auto-poly-ADP-ribosylation or ubiquitination) promote PARP1 removal from chromatin. Poly-ADP-ribosyltransferase that mediates poly-ADP-ribosylation of proteins and plays a key role in DNA repair. Mediates glutamate, aspartate, serine, histidine or tyrosine ADP-ribosylation of proteins: the ADP-D-ribosyl group of NAD(+) is transferred to the acceptor carboxyl group of target residues and further ADP-ribosyl groups are transferred to the 2'-position of the terminal adenosine moiety, building up a polymer with an average chain length of 20-30 units. Serine ADP-ribosylation of proteins constitutes the primary form of ADP-ribosylation of proteins in response to DNA damage. Specificity for the different amino acids is conferred by interacting factors, such as HPF1 and NMNAT1. Following interaction with HPF1, catalyzes serine ADP-ribosylation of target proteins; HPF1 confers serine specificity by completing the PARP1 active site. Also catalyzes tyrosine ADP-ribosylation of target proteins following interaction with HPF1. Following interaction with NMNAT1, catalyzes glutamate and aspartate ADP-ribosylation of target proteins; NMNAT1 confers glutamate and aspartate specificity. PARP1 initiates the repair of DNA breaks: recognizes and binds DNA breaks within chromatin and recruits HPF1, licensing serine ADP-ribosylation of target proteins, such as histones (H2BS6ADPr and H3S10ADPr), thereby promoting decompaction of chromatin and the recruitment of repair factors leading to the reparation of DNA strand breaks. HPF1 initiates serine ADP-ribosylation but restricts the polymerase activity of PARP1 in order to limit the length of poly-ADP-ribose chains. In addition to base excision repair (BER) pathway, also involved in double-strand breaks (DSBs) repair: together with TIMELESS, accumulates at DNA damage sites and promotes homologous recombination repair by mediating poly-ADP-ribosylation. Mediates the poly-ADP-ribosylation of a number of proteins, including itself, APLF, CHFR and NFAT5. In addition to proteins, also able to ADP-ribosylate DNA: catalyzes ADP-ribosylation of DNA strand break termini containing terminal phosphates and a 2'-OH group in single- and double-stranded DNA, respectively. Required for PARP9 and DTX3L recruitment to DNA damage sites. PARP1-dependent PARP9-DTX3L-mediated ubiquitination promotes the rapid and specific recruitment of 53BP1/TP53BP1, UIMC1/RAP80, and BRCA1 to DNA damage sites. PARP1-mediated DNA repair in neurons plays a role in sleep: senses DNA damage in neurons and promotes sleep, facilitating efficient DNA repair. In addition to DNA repair, also involved in other processes, such as transcription regulation, programmed cell death, membrane repair, adipogenesis and innate immunity. Acts as a repressor of transcription: binds to nucleosomes and modulates chromatin structure in a manner similar to histone H1, thereby altering RNA polymerase II. Acts both as a positive and negative regulator of transcription elongation, depending on the context. Acts as a positive regulator of transcription elongation by mediating poly-ADP-ribosylation of NELFE, preventing RNA-binding activity of NELFE and relieving transcription pausing. Acts as a negative regulator of transcription elongation in response to DNA damage by catalyzing poly-ADP-ribosylation of CCNT1, disrupting the phase separation activity of CCNT1 and subsequent activation of CDK9. Involved in replication fork progression following interaction with CARM1: mediates poly-ADP-ribosylation at replication forks, slowing fork progression. Poly-ADP-ribose chains generated by PARP1 also play a role in poly-ADP-ribose-dependent cell death, a process named parthanatos. Also acts as a negative regulator of the cGAS-STING pathway. Acts by mediating poly-ADP-ribosylation of CGAS: PARP1 translocates into the cytosol following phosphorylation by PRKDC and catalyzes poly-ADP-ribosylation and inactivation of CGAS. Acts as a negative regulator of adipogenesis: catalyzes poly-ADP-ribosylation of histone H2B on 'Glu-35' (H2BE35ADPr) following interaction with NMNAT1, inhibiting phosphorylation of H2B at 'Ser-36' (H2BS36ph), thereby blocking expression of pro-adipogenetic genes. Involved in the synthesis of ATP in the nucleus, together with NMNAT1, PARG and NUDT5. Nuclear ATP generation is required for extensive chromatin remodeling events that are energy-consuming. In terms of biological role, promotes AIFM1-mediated apoptosis. This form, which translocates into the cytoplasm following cleavage by caspase-3 (CASP3) and caspase-7 (CASP7) in response to apoptosis, is auto-poly-ADP-ribosylated and serves as a poly-ADP-ribose carrier to induce AIFM1-mediated apoptosis. Its function is as follows. This cleavage form irreversibly binds to DNA breaks and interferes with DNA repair, promoting DNA damage-induced apoptosis. The chain is Poly [ADP-ribose] polymerase 1 (Parp1) from Mus musculus (Mouse).